A 392-amino-acid chain; its full sequence is S-adenosylmethionine synthase (392 aa).

Position 20 (His20) interacts with ATP. A Mg(2+)-binding site is contributed by Asp22. Glu48 is a K(+) binding site. Residues Glu61 and Gln106 each coordinate L-methionine. The interval 106–116 is flexible loop; that stretch reads QSRDIINAIEK. Residues 171 to 173, Asp248, 254 to 255, Ala271, and Lys275 each bind ATP; these read DSK and RK. Residue Asp248 coordinates L-methionine. Position 279 (Lys279) interacts with L-methionine.

It belongs to the AdoMet synthase family. In terms of assembly, homotetramer; dimer of dimers. Mg(2+) is required as a cofactor. The cofactor is K(+).

Its subcellular location is the cytoplasm. The enzyme catalyses L-methionine + ATP + H2O = S-adenosyl-L-methionine + phosphate + diphosphate. It participates in amino-acid biosynthesis; S-adenosyl-L-methionine biosynthesis; S-adenosyl-L-methionine from L-methionine: step 1/1. Functionally, catalyzes the formation of S-adenosylmethionine (AdoMet) from methionine and ATP. The overall synthetic reaction is composed of two sequential steps, AdoMet formation and the subsequent tripolyphosphate hydrolysis which occurs prior to release of AdoMet from the enzyme. The polypeptide is S-adenosylmethionine synthase (Borreliella afzelii (strain PKo) (Borrelia afzelii)).